Here is a 282-residue protein sequence, read N- to C-terminus: DNA-3-methyladenine glycosylase 2 (282 aa).

Aspartate 238 functions as the Proton acceptor in the catalytic mechanism.

The protein belongs to the alkylbase DNA glycosidase AlkA family. In terms of assembly, monomer.

It catalyses the reaction Hydrolysis of alkylated DNA, releasing 3-methyladenine, 3-methylguanine, 7-methylguanine and 7-methyladenine.. Functionally, hydrolysis of the deoxyribose N-glycosidic bond to excise 3-methyladenine, 3-methylguanine, 7-methylguanine, O2-methylthymine, and O2-methylcytosine from the damaged DNA polymer formed by alkylation lesions. This Escherichia coli (strain K12) protein is DNA-3-methyladenine glycosylase 2 (alkA).